Consider the following 258-residue polypeptide: uncharacterized protein (258 aa).

The next 7 membrane-spanning stretches (helical) occupy residues 8–28 (VFLALSGAIAFLLPIGLIVWF), 38–58 (VFFIGALTFFVFAQLLEGGVH), 70–90 (EAMQHPLWYGIYGCLMAGIFE), 121–141 (LEAILITGLSSISLIVYAFAI), 176–196 (LGGIERISAIAVQIGLSLLVL), 204–224 (PLFLLYSILLHALFNVPAVLY), and 231–251 (HAAAVEIIVALIAALSVYWIV).

Its subcellular location is the cell membrane. This is an uncharacterized protein from Bacillus subtilis (strain 168).